Reading from the N-terminus, the 293-residue chain is Pyridoxal 5'-phosphate synthase subunit PdxS (293 aa).

Residue Asp23 participates in D-ribose 5-phosphate binding. The active-site Schiff-base intermediate with D-ribose 5-phosphate is the Lys80. A D-ribose 5-phosphate-binding site is contributed by Gly152. Arg164 lines the D-glyceraldehyde 3-phosphate pocket. D-ribose 5-phosphate-binding positions include Gly213 and Gly234–Ser235.

It belongs to the PdxS/SNZ family. In the presence of PdxT, forms a dodecamer of heterodimers.

It catalyses the reaction aldehydo-D-ribose 5-phosphate + D-glyceraldehyde 3-phosphate + L-glutamine = pyridoxal 5'-phosphate + L-glutamate + phosphate + 3 H2O + H(+). Its pathway is cofactor biosynthesis; pyridoxal 5'-phosphate biosynthesis. Catalyzes the formation of pyridoxal 5'-phosphate from ribose 5-phosphate (RBP), glyceraldehyde 3-phosphate (G3P) and ammonia. The ammonia is provided by the PdxT subunit. Can also use ribulose 5-phosphate and dihydroxyacetone phosphate as substrates, resulting from enzyme-catalyzed isomerization of RBP and G3P, respectively. This is Pyridoxal 5'-phosphate synthase subunit PdxS from Thermus thermophilus (strain ATCC 27634 / DSM 579 / HB8).